Here is a 473-residue protein sequence, read N- to C-terminus: Sorting nexin-17 (473 aa).

The PX domain maps to 1 to 108 (MHFSIPETEV…SFLRKAQQET (108 aa)). Residues Arg-35, Ser-37, Lys-61, and Arg-74 each coordinate a 1,2-diacyl-sn-glycero-3-phospho-(1D-myo-inositol-3-phosphate). In terms of domain architecture, Ras-associating spans 114-205 (EEVQLEIYLS…YRIILRKSYW (92 aa)). Residues 114–433 (EEVQLEIYLS…DPNREQVVKL (320 aa)) form an FERM-like region. Positions 269–433 (GYIKFDPCIT…DPNREQVVKL (165 aa)) are PTB-like F3 module. The interval 391 to 431 (SIKKQMQKKRLNGSLQRSDSQQAVKSPPILDSPDPNREQVV) is disordered. Residues 403 to 414 (GSLQRSDSQQAV) are compositionally biased toward polar residues.

Belongs to the sorting nexin family. As to quaternary structure, monomer. Interacts with CCDC22, CCDC93, DSCR3 and VPS35L; the interaction with DSCR3 is direct and associates SNX17 with the retriever and CCC complexes.

The protein resides in the cytoplasm. Its subcellular location is the early endosome. It is found in the cytoplasmic vesicle membrane. In terms of biological role, critical regulator of endosomal recycling of numerous surface proteins, including integrins, signaling receptor and channels. Binds to NPxY sequences in the cytoplasmic tails of target cargos. Associates with retriever and CCC complexes to prevent lysosomal degradation and promote cell surface recycling of numerous cargos such as integrins ITGB1, ITGB5 and their associated alpha subunits. Also required for maintenance of normal cell surface levels of APP and LRP1. Interacts with membranes containing phosphatidylinositol 3-phosphate (PtdIns(3P)). In Danio rerio (Zebrafish), this protein is Sorting nexin-17 (snx17).